An 843-amino-acid chain; its full sequence is Protein P (843 aa).

A terminal protein domain (TP) region spans residues M1–Q177. The interval D178 to I346 is spacer. Disordered stretches follow at residues K220 to E258 and S292 to S319. Low complexity predominate over residues P308–S319. Positions D347 to Q690 are polymerase/reverse transcriptase domain (RT). Positions E357 to I600 constitute a Reverse transcriptase domain. 3 residues coordinate Mg(2+): D429, D551, and D552.

The protein belongs to the hepadnaviridae P protein family.

The catalysed reaction is DNA(n) + a 2'-deoxyribonucleoside 5'-triphosphate = DNA(n+1) + diphosphate. It carries out the reaction Endonucleolytic cleavage to 5'-phosphomonoester.. With respect to regulation, activated by host HSP70 and HSP40 in vitro to be able to bind the epsilon loop of the pgRNA. Because deletion of the RNase H region renders the protein partly chaperone-independent, the chaperones may be needed indirectly to relieve occlusion of the RNA-binding site by this domain. Inhibited by several reverse-transcriptase inhibitors: Lamivudine, Adefovir and Entecavir. Multifunctional enzyme that converts the viral RNA genome into dsDNA in viral cytoplasmic capsids. This enzyme displays a DNA polymerase activity that can copy either DNA or RNA templates, and a ribonuclease H (RNase H) activity that cleaves the RNA strand of RNA-DNA heteroduplexes in a partially processive 3'- to 5'-endonucleasic mode. Neo-synthesized pregenomic RNA (pgRNA) are encapsidated together with the P protein, and reverse-transcribed inside the nucleocapsid. Initiation of reverse-transcription occurs first by binding the epsilon loop on the pgRNA genome, and is initiated by protein priming, thereby the 5'-end of (-)DNA is covalently linked to P protein. Partial (+)DNA is synthesized from the (-)DNA template and generates the relaxed circular DNA (RC-DNA) genome. After budding and infection, the RC-DNA migrates in the nucleus, and is converted into a plasmid-like covalently closed circular DNA (cccDNA). The activity of P protein does not seem to be necessary for cccDNA generation, and is presumably released from (+)DNA by host nuclear DNA repair machinery. The protein is Protein P of Hepatitis B virus genotype B1 (isolate Japan/Yamagata-2/1998) (HBV-B).